The following is a 102-amino-acid chain: P antigen family member 4 (102 aa).

Residues 1–10 (MSARVRSRSR) show a composition bias toward basic residues. The segment at 1-102 (MSARVRSRSR…KTKEAGDGQP (102 aa)) is disordered. Ser-7 carries the post-translational modification Phosphoserine; by CLK2. Ser-9 bears the Phosphoserine; by HIPK1 and CLK2 mark. A compositionally biased stretch (basic and acidic residues) spans 45–85 (GQEREGTPPIEERKVEGDCQEMDLEKTRSERGDGSDVKEKT). Thr-51 is subject to Phosphothreonine; by HIPK1 and CLK2. A Phosphothreonine; by CLK2 modification is found at Thr-71. 2 positions are modified to phosphoserine; by CLK2: Ser-73 and Ser-79. Phosphothreonine; by CLK2 is present on residues Thr-85 and Thr-94.

This sequence belongs to the GAGE family. As to quaternary structure, interacts with JUN. Post-translationally, HIPK1-mediated phosphorylation at Thr-51 leads to the compaction of its intrinsically disordered conformation and is critical for its ability to potentiate the transcriptional activator activity of JUN inspite of a reduced interaction with JUN. CLK2-mediated phosphorylation at multiple Ser and Thr residues attenuates its ability to potentiate JUN transcriptional activator activity. As to expression, expressed at basal lvels in the adult normal prostate gland but is highly up-regulated in the fetal prostate and prostate cancer cells. Preferentially expressed in normal male and female reproductive tissues, testis, fallopian tube, uterus, and placenta, as well as in testicular cancer, uterine cancer, cervical cancer and kidney cancer.

The protein localises to the cytoplasm. Its subcellular location is the nucleus. It is found in the mitochondrion. In terms of biological role, intrinsically disordered protein that potentiates the transcriptional activator activity of JUN. Protects cells from stress-induced apoptosis by inhibiting reactive oxygen species (ROS) production and via regulation of the MAPK signaling pathway. This chain is P antigen family member 4 (PAGE4), found in Homo sapiens (Human).